The sequence spans 501 residues: Phenylalanine--tRNA ligase alpha subunit (501 aa).

L-phenylalanine-binding positions include Thr344, 383 to 385 (QID), and Phe424. Position 426 (Glu426) interacts with Mg(2+). Phe449 contributes to the L-phenylalanine binding site.

It belongs to the class-II aminoacyl-tRNA synthetase family. Phe-tRNA synthetase alpha subunit type 2 subfamily. Tetramer of two alpha and two beta subunits. Mg(2+) serves as cofactor.

Its subcellular location is the cytoplasm. The catalysed reaction is tRNA(Phe) + L-phenylalanine + ATP = L-phenylalanyl-tRNA(Phe) + AMP + diphosphate + H(+). The sequence is that of Phenylalanine--tRNA ligase alpha subunit from Thermococcus kodakarensis (strain ATCC BAA-918 / JCM 12380 / KOD1) (Pyrococcus kodakaraensis (strain KOD1)).